The following is a 473-amino-acid chain: ATP synthase subunit beta, chloroplastic (473 aa).

Residue G172–T179 coordinates ATP.

The protein belongs to the ATPase alpha/beta chains family. In terms of assembly, F-type ATPases have 2 components, CF(1) - the catalytic core - and CF(0) - the membrane proton channel. CF(1) has five subunits: alpha(3), beta(3), gamma(1), delta(1), epsilon(1). CF(0) has four main subunits: a(1), b(1), b'(1) and c(9-12).

The protein localises to the plastid. The protein resides in the chloroplast thylakoid membrane. The enzyme catalyses ATP + H2O + 4 H(+)(in) = ADP + phosphate + 5 H(+)(out). Its function is as follows. Produces ATP from ADP in the presence of a proton gradient across the membrane. The catalytic sites are hosted primarily by the beta subunits. The protein is ATP synthase subunit beta, chloroplastic of Pteridium esculentum (Bracken fern).